A 325-amino-acid chain; its full sequence is tRNA N6-adenosine threonylcarbamoyltransferase (325 aa).

3 residues coordinate Fe cation: histidine 107, histidine 111, and tyrosine 127. Substrate is bound by residues 127–131 (YVSGG), aspartate 159, glycine 172, glutamate 176, and asparagine 257. Aspartate 285 is a binding site for Fe cation.

Belongs to the KAE1 / TsaD family. As to quaternary structure, monomer. Component of the KEOPS complex that consists of Kae1, Bud32, Cgi121 and Pcc1; the whole complex dimerizes. It depends on Fe(2+) as a cofactor.

The protein localises to the cytoplasm. The catalysed reaction is L-threonylcarbamoyladenylate + adenosine(37) in tRNA = N(6)-L-threonylcarbamoyladenosine(37) in tRNA + AMP + H(+). Required for the formation of a threonylcarbamoyl group on adenosine at position 37 (t(6)A37) in tRNAs that read codons beginning with adenine. Is a component of the KEOPS complex that is probably involved in the transfer of the threonylcarbamoyl moiety of threonylcarbamoyl-AMP (TC-AMP) to the N6 group of A37. Kae1 likely plays a direct catalytic role in this reaction, but requires other protein(s) of the complex to fulfill this activity. The chain is tRNA N6-adenosine threonylcarbamoyltransferase from Thermococcus gammatolerans (strain DSM 15229 / JCM 11827 / EJ3).